A 275-amino-acid polypeptide reads, in one-letter code: Dermonecrotic toxin LarSicTox-alphaIII1 (275 aa).

Histidine 5 is a catalytic residue. Positions 25 and 27 each coordinate Mg(2+). Histidine 41 (nucleophile) is an active-site residue. 2 disulfides stabilise this stretch: cysteine 45–cysteine 51 and cysteine 47–cysteine 190. Mg(2+) is bound at residue aspartate 85. Asparagine 252 carries N-linked (GlcNAc...) asparagine glycosylation.

This sequence belongs to the arthropod phospholipase D family. Class II subfamily. Mg(2+) is required as a cofactor. Expressed by the venom gland.

The protein resides in the secreted. It catalyses the reaction an N-(acyl)-sphingosylphosphocholine = an N-(acyl)-sphingosyl-1,3-cyclic phosphate + choline. It carries out the reaction an N-(acyl)-sphingosylphosphoethanolamine = an N-(acyl)-sphingosyl-1,3-cyclic phosphate + ethanolamine. The catalysed reaction is a 1-acyl-sn-glycero-3-phosphocholine = a 1-acyl-sn-glycero-2,3-cyclic phosphate + choline. The enzyme catalyses a 1-acyl-sn-glycero-3-phosphoethanolamine = a 1-acyl-sn-glycero-2,3-cyclic phosphate + ethanolamine. In terms of biological role, dermonecrotic toxins cleave the phosphodiester linkage between the phosphate and headgroup of certain phospholipids (sphingolipid and lysolipid substrates), forming an alcohol (often choline) and a cyclic phosphate. This toxin acts on sphingomyelin (SM). It may also act on ceramide phosphoethanolamine (CPE), lysophosphatidylcholine (LPC) and lysophosphatidylethanolamine (LPE), but not on lysophosphatidylserine (LPS), and lysophosphatidylglycerol (LPG). It acts by transphosphatidylation, releasing exclusively cyclic phosphate products as second products. Induces dermonecrosis, hemolysis, increased vascular permeability, edema, inflammatory response, and platelet aggregation. This is Dermonecrotic toxin LarSicTox-alphaIII1 from Loxosceles arizonica (Arizona brown spider).